A 98-amino-acid polypeptide reads, in one-letter code: NADH-ubiquinone oxidoreductase chain 4L (98 aa).

Helical transmembrane passes span 1 to 21 (MTSI…GVLI), 28 to 48 (STLL…ALLI), and 59 to 79 (APII…ALLV).

This sequence belongs to the complex I subunit 4L family. In terms of assembly, core subunit of respiratory chain NADH dehydrogenase (Complex I) which is composed of 45 different subunits.

The protein localises to the mitochondrion inner membrane. The catalysed reaction is a ubiquinone + NADH + 5 H(+)(in) = a ubiquinol + NAD(+) + 4 H(+)(out). In terms of biological role, core subunit of the mitochondrial membrane respiratory chain NADH dehydrogenase (Complex I) which catalyzes electron transfer from NADH through the respiratory chain, using ubiquinone as an electron acceptor. Part of the enzyme membrane arm which is embedded in the lipid bilayer and involved in proton translocation. In Trichosurus vulpecula (Brush-tailed possum), this protein is NADH-ubiquinone oxidoreductase chain 4L (MT-ND4L).